The following is a 209-amino-acid chain: uncharacterized protein (209 aa).

This is an uncharacterized protein from Orgyia pseudotsugata (Douglas-fir tussock moth).